Here is a 304-residue protein sequence, read N- to C-terminus: Release factor glutamine methyltransferase (304 aa).

The S-adenosyl-L-methionine site is built by aspartate 144 and asparagine 188. Residue 188–191 (NPPY) coordinates substrate.

The protein belongs to the protein N5-glutamine methyltransferase family. PrmC subfamily.

The catalysed reaction is L-glutaminyl-[peptide chain release factor] + S-adenosyl-L-methionine = N(5)-methyl-L-glutaminyl-[peptide chain release factor] + S-adenosyl-L-homocysteine + H(+). Its function is as follows. Methylates the class 1 translation termination release factors RF1/PrfA and RF2/PrfB on the glutamine residue of the universally conserved GGQ motif. The polypeptide is Release factor glutamine methyltransferase (Mycobacterium tuberculosis (strain CDC 1551 / Oshkosh)).